The following is a 346-amino-acid chain: Large ribosomal subunit protein uL1c (346 aa).

Residues 1–70 (MAACATHSSL…RASNHKFIVS (70 aa)) constitute a chloroplast transit peptide. Phosphotyrosine is present on Tyr-129. The residue at position 177 (Thr-177) is a Phosphothreonine. A Phosphoserine modification is found at Ser-197.

The protein belongs to the universal ribosomal protein uL1 family. As to quaternary structure, part of the 50S ribosomal subunit.

Its subcellular location is the plastid. It localises to the chloroplast. Functionally, this protein binds directly to 23S ribosomal RNA. The sequence is that of Large ribosomal subunit protein uL1c (RPL1) from Arabidopsis thaliana (Mouse-ear cress).